Reading from the N-terminus, the 573-residue chain is NEDD4-binding protein 3-A (573 aa).

2 disordered regions span residues 168–216 (LNTM…INSL) and 382–407 (LRGESEELRQKQSQSDNSGPKLEDSK). Composition is skewed to polar residues over residues 184 to 196 (QPSNSHSNNQSES) and 207 to 216 (DSRQNSINSL). A coiled-coil region spans residues 289-539 (VEDVARQLEE…KEIQSSYREM (251 aa)).

The protein belongs to the N4BP3 family.

It localises to the cytoplasmic vesicle. The protein localises to the cell projection. Its subcellular location is the axon. The protein resides in the dendrite. Its function is as follows. Plays a role in axon and dendrite arborization during cranial nerve development. Also important for neural crest migration and early development of other anterior structures including eye, brain and cranial cartilage. The protein is NEDD4-binding protein 3-A of Xenopus laevis (African clawed frog).